The following is a 156-amino-acid chain: Small ribosomal subunit protein uS7 (156 aa).

This sequence belongs to the universal ribosomal protein uS7 family. Part of the 30S ribosomal subunit. Contacts proteins S9 and S11.

Functionally, one of the primary rRNA binding proteins, it binds directly to 16S rRNA where it nucleates assembly of the head domain of the 30S subunit. Is located at the subunit interface close to the decoding center, probably blocks exit of the E-site tRNA. The protein is Small ribosomal subunit protein uS7 of Vibrio vulnificus (strain CMCP6).